The primary structure comprises 420 residues: MSAPSNKMSATDQMRAMLDQLMGTTRNGDERQLKFSDPRVCKSFLLDCCPHDILASTRMDLGECPKVHDLAFRADYESAAKTRDYYYDIEAMEHLQAFIADCDRRTDSAKQRLKETQEELTAEVAEKANAVHGLAEEIGKKLAKAEALGEAGEVEDSMELMKEIEELRAKKIKAEHEYRTSMPASTYQQQKLRVCEVCSAYLGIHDNDIRLADHFGGKLHLGFLTIREKLIELEKTAAPRKAELKRTGKMTDREDEGRGRNRYFVGGRELDRRSRVHRSRSRERQRNRDGDRERPNNGRGPEEKGSERPKEAADGPERAERAPDRGGRRDDRDNHGRDHRERERDGRRDRDRHGRNDRGRFGDRGGGGGGGGHHRDDRRRSRSRERSPRERRNFNHFRDGGGGGNGQRKRSYSRERNYRR.

The stretch at 99 to 130 (IADCDRRTDSAKQRLKETQEELTAEVAEKANA) forms a coiled coil. Composition is skewed to basic and acidic residues over residues 242 to 259 (AELK…EGRG), 282 to 363 (RERQ…RFGD), and 373 to 399 (HHRD…HFRD). Residues 242 to 420 (AELKRTGKMT…SYSRERNYRR (179 aa)) are disordered.

Belongs to the Luc7 family. Interacts with x16 (via Arg/Ser-rich region).

May bind to RNA via its Arg/Ser-rich domain. The chain is Putative RNA-binding protein Alsin2 from Drosophila melanogaster (Fruit fly).